The sequence spans 271 residues: MRLPTVLIGRYIPVDSIVHRLDPRAKLLGMIFLISAVLIVPNLLFYLVPGLAIFLLMFLSRTGFKIYLAGLRSLWFFLVFAVLVQFFSSSEGEKIFWMITDRAIWSAVYIMLRLVLIILLAENFSATTPPLLSARAIESIFSTFGARKIGHEIGMVMTIAMRFVPVLALEADRILKAQIARGANFERGKFFDRIRALVVIIVPLLISALRKAEELAVAMEARLYTGEPPKTRFKDIKWKPMDTLYVLLTAGVLVLVLFGRYFVDGVFQYGS.

Helical transmembrane passes span 38 to 58 (LIVP…LLMF), 66 to 86 (IYLA…LVQF), 104 to 124 (IWSA…AENF), 149 to 169 (IGHE…VLAL), 197 to 217 (LVVI…ELAV), and 243 to 263 (TLYV…RYFV).

It belongs to the energy-coupling factor EcfT family. Forms a stable energy-coupling factor (ECF) transporter complex composed of 2 membrane-embedded substrate-binding proteins (S component, RibU, BioY), 2 ATP-binding proteins (A component) and 2 transmembrane proteins (T component) upon coexpression in E.coli. A stable subcomplex with both A and T components are also isolated. This complex interacts with at least 2 substrate-specific components, BioY and RibU.

The protein resides in the cell inner membrane. In terms of biological role, transmembrane (T) component of an energy-coupling factor (ECF) ABC-transporter complex. Unlike classic ABC transporters this ECF transporter provides the energy necessary to transport a number of different substrates. Expression of the complex plus RibU in E.coli allows riboflavin uptake; uptake does not occur in the absence of RibU or the EcfA1A2T complex. This Thermotoga maritima (strain ATCC 43589 / DSM 3109 / JCM 10099 / NBRC 100826 / MSB8) protein is Energy-coupling factor transporter transmembrane protein EcfT (ecfT).